A 227-amino-acid polypeptide reads, in one-letter code: NADH-quinone oxidoreductase subunit C (227 aa).

It belongs to the complex I 30 kDa subunit family. In terms of assembly, NDH-1 is composed of 14 different subunits. Subunits NuoB, C, D, E, F, and G constitute the peripheral sector of the complex.

It localises to the cell inner membrane. The catalysed reaction is a quinone + NADH + 5 H(+)(in) = a quinol + NAD(+) + 4 H(+)(out). NDH-1 shuttles electrons from NADH, via FMN and iron-sulfur (Fe-S) centers, to quinones in the respiratory chain. The immediate electron acceptor for the enzyme in this species is believed to be ubiquinone. Couples the redox reaction to proton translocation (for every two electrons transferred, four hydrogen ions are translocated across the cytoplasmic membrane), and thus conserves the redox energy in a proton gradient. This chain is NADH-quinone oxidoreductase subunit C, found in Coxiella burnetii (strain Dugway 5J108-111).